The primary structure comprises 52 residues: Large ribosomal subunit protein bL32c (52 aa).

The protein belongs to the bacterial ribosomal protein bL32 family.

The protein resides in the plastid. It is found in the chloroplast. This chain is Large ribosomal subunit protein bL32c, found in Morus indica (Mulberry).